A 415-amino-acid chain; its full sequence is Diaminopimelate decarboxylase (415 aa).

At Lys60 the chain carries N6-(pyridoxal phosphate)lysine. Pyridoxal 5'-phosphate contacts are provided by residues Gly239 and 273–276 (EPGR). Substrate is bound by residues Arg276, Arg312, and Tyr316. The active-site Proton donor is Cys342. The substrate site is built by Glu343 and Tyr370. Pyridoxal 5'-phosphate is bound at residue Tyr370.

This sequence belongs to the Orn/Lys/Arg decarboxylase class-II family. LysA subfamily. As to quaternary structure, homodimer. The cofactor is pyridoxal 5'-phosphate.

It carries out the reaction meso-2,6-diaminopimelate + H(+) = L-lysine + CO2. The protein operates within amino-acid biosynthesis; L-lysine biosynthesis via DAP pathway; L-lysine from DL-2,6-diaminopimelate: step 1/1. Its function is as follows. Specifically catalyzes the decarboxylation of meso-diaminopimelate (meso-DAP) to L-lysine. This chain is Diaminopimelate decarboxylase, found in Pseudomonas aeruginosa (strain ATCC 15692 / DSM 22644 / CIP 104116 / JCM 14847 / LMG 12228 / 1C / PRS 101 / PAO1).